Here is a 195-residue protein sequence, read N- to C-terminus: Probable nicotinate-nucleotide adenylyltransferase (195 aa).

Belongs to the NadD family.

It catalyses the reaction nicotinate beta-D-ribonucleotide + ATP + H(+) = deamido-NAD(+) + diphosphate. Its pathway is cofactor biosynthesis; NAD(+) biosynthesis; deamido-NAD(+) from nicotinate D-ribonucleotide: step 1/1. Catalyzes the reversible adenylation of nicotinate mononucleotide (NaMN) to nicotinic acid adenine dinucleotide (NaAD). The sequence is that of Probable nicotinate-nucleotide adenylyltransferase from Chlorobaculum tepidum (strain ATCC 49652 / DSM 12025 / NBRC 103806 / TLS) (Chlorobium tepidum).